A 91-amino-acid chain; its full sequence is DNA-binding protein HRL53 (91 aa).

Positions 57-91 (ATKGRNPSTGAEVDIPARNVPKFTPGKGLKDAVNG) are disordered.

This sequence belongs to the bacterial histone-like protein family.

In terms of biological role, histone-like DNA-binding protein which is capable of wrapping DNA to stabilize it, and thus to prevent its denaturation under extreme environmental conditions. Binds to nod promoters and induces DNA binding. The protein is DNA-binding protein HRL53 of Rhizobium leguminosarum.